Here is a 273-residue protein sequence, read N- to C-terminus: MSLEQIIEQAFEKRAEYSPATMPQEVKDAVNSVLDQLDNGSLRVAEKKDGEWIVNQWAKKAVLLSFRLNDNYPMQTGEHVQFYDKVPTKFANWTEQQFVEAGVRVVPPAVARRGSFIAKGVVLMPSYTNIGAYVDEGAMIDTWATVGSCAQIGKNVHLSGGVGIGGVLEPLQANPTIIEDNCFIGARSEIVEGVIVEEGSVISMGVYIGQSTKIYDRETGEITYGRVPAGSVVVSGSLPSKDGSHSLYCAVIVKKVDAQTRSKTSINELLRLA.

Substrate contacts are provided by Arg-104 and Asp-141.

This sequence belongs to the transferase hexapeptide repeat family. In terms of assembly, homotrimer.

Its subcellular location is the cytoplasm. It catalyses the reaction (S)-2,3,4,5-tetrahydrodipicolinate + succinyl-CoA + H2O = (S)-2-succinylamino-6-oxoheptanedioate + CoA. It participates in amino-acid biosynthesis; L-lysine biosynthesis via DAP pathway; LL-2,6-diaminopimelate from (S)-tetrahydrodipicolinate (succinylase route): step 1/3. This is 2,3,4,5-tetrahydropyridine-2,6-dicarboxylate N-succinyltransferase from Psychrobacter sp. (strain PRwf-1).